An 860-amino-acid polypeptide reads, in one-letter code: MKSSEIRQAFLNYFVQRGHQIVASSSLVPSNDPTLLFTNAGMVQFKDLFLGLETRSYQRAATAQRCVRAGGKHNDLENVGYTARHHTFFEMLGNFSFGDYFKREAIQYAWEFLTEVLHIPAERLWVTVYKEDLEAEDIWLKEMKVSPERFSRCGEKDNFWSMGDTGPCGPCTEIFYDHGPEVAGGPPGSPDEDGDRYIEIWNLVFMQFNRDREGHLHLLPKPSVDTGMGLERLAAVIQGVHSNYEIDSFQYLIKAIAQLGQNIDLNHTSLKVIADHIRSCSFLIVDGVLPSNEGRGYVLRRIIRRAVRHGNKLGLPSPFFFKLVQPLIDVMGDAYPELINSKAHIERILQQEENQFTRTLEQGLRLLQDHIKNLKGQELSGEVAFKLYDTYGFPIDLTADIIREQGLHIDMEAFNQLMQQQREQSQAASQFTTDYHAVSQLDHQSEFHGYEKESMEAKIIGLLQEGNEVKSINKGAKGAVILDHTPFYAESGGQVGDKGLLIGKNCSFQVDDTQKVGQAVVHYGEVIKGELTLDLSIHAQVDHIRRDAIRLNHTATHLLHAALKKIVGQHVQQRGSLVDAERARFDFSHFEALNPQQIQQIEEVVNAQIRANNEVITQVMDIESAKQSGAVALFGEKYSDAVRVLSMGDFSKELCGGTHARRTGDIGLFKIVAEYGIASGIRRIEMVTGRYALAWVNEQLGFMNNLAATLKTTPNSLQEKISQLLLDNKNQEKMIAKLLSEKAQKSGADILGEIEEIKGINLLIKQLEGMDSQTMRHTMDQLKSRIDSAVIILFTIEQNKMNVIAGVSKNIIGKTPSAAQLVRHLCGKGGGRDDMAQGGGNVPEDLNSKIKEIREMIEKI.

Histidine 553, histidine 557, cysteine 655, and histidine 659 together coordinate Zn(2+).

The protein belongs to the class-II aminoacyl-tRNA synthetase family. Zn(2+) serves as cofactor.

It localises to the cytoplasm. It carries out the reaction tRNA(Ala) + L-alanine + ATP = L-alanyl-tRNA(Ala) + AMP + diphosphate. In terms of biological role, catalyzes the attachment of alanine to tRNA(Ala) in a two-step reaction: alanine is first activated by ATP to form Ala-AMP and then transferred to the acceptor end of tRNA(Ala). Also edits incorrectly charged Ser-tRNA(Ala) and Gly-tRNA(Ala) via its editing domain. This Legionella pneumophila (strain Paris) protein is Alanine--tRNA ligase.